A 288-amino-acid polypeptide reads, in one-letter code: 4-diphosphocytidyl-2-C-methyl-D-erythritol kinase (288 aa).

Lys10 is a catalytic residue. An ATP-binding site is contributed by 94–104 (PVAAGLGGGSS). Residue Asp136 is part of the active site.

Belongs to the GHMP kinase family. IspE subfamily.

It catalyses the reaction 4-CDP-2-C-methyl-D-erythritol + ATP = 4-CDP-2-C-methyl-D-erythritol 2-phosphate + ADP + H(+). It participates in isoprenoid biosynthesis; isopentenyl diphosphate biosynthesis via DXP pathway; isopentenyl diphosphate from 1-deoxy-D-xylulose 5-phosphate: step 3/6. Its function is as follows. Catalyzes the phosphorylation of the position 2 hydroxy group of 4-diphosphocytidyl-2C-methyl-D-erythritol. This Lactiplantibacillus plantarum (strain ATCC BAA-793 / NCIMB 8826 / WCFS1) (Lactobacillus plantarum) protein is 4-diphosphocytidyl-2-C-methyl-D-erythritol kinase.